A 123-amino-acid chain; its full sequence is Small ribosomal subunit protein uS12cz/uS12cy (123 aa).

It belongs to the universal ribosomal protein uS12 family. Part of the 30S ribosomal subunit.

The protein resides in the plastid. It is found in the chloroplast. In terms of biological role, with S4 and S5 plays an important role in translational accuracy. Located at the interface of the 30S and 50S subunits. This is Small ribosomal subunit protein uS12cz/uS12cy (rps12-A) from Psilotum nudum (Whisk fern).